The primary structure comprises 390 residues: Dual-specificity RNA methyltransferase RlmN (390 aa).

Glu-111 (proton acceptor) is an active-site residue. The region spanning 117-356 (EDDRATLCVS…VIVRKTRGDD (240 aa)) is the Radical SAM core domain. The cysteines at positions 124 and 361 are disulfide-linked. Residues Cys-131, Cys-135, and Cys-138 each contribute to the [4Fe-4S] cluster site. S-adenosyl-L-methionine contacts are provided by residues 185–186 (GE), Ser-217, 239–241 (SLH), and Asn-318. Cys-361 serves as the catalytic S-methylcysteine intermediate.

Belongs to the radical SAM superfamily. RlmN family. The cofactor is [4Fe-4S] cluster.

It localises to the cytoplasm. The catalysed reaction is adenosine(2503) in 23S rRNA + 2 reduced [2Fe-2S]-[ferredoxin] + 2 S-adenosyl-L-methionine = 2-methyladenosine(2503) in 23S rRNA + 5'-deoxyadenosine + L-methionine + 2 oxidized [2Fe-2S]-[ferredoxin] + S-adenosyl-L-homocysteine. It catalyses the reaction adenosine(37) in tRNA + 2 reduced [2Fe-2S]-[ferredoxin] + 2 S-adenosyl-L-methionine = 2-methyladenosine(37) in tRNA + 5'-deoxyadenosine + L-methionine + 2 oxidized [2Fe-2S]-[ferredoxin] + S-adenosyl-L-homocysteine. Functionally, specifically methylates position 2 of adenine 2503 in 23S rRNA and position 2 of adenine 37 in tRNAs. m2A2503 modification seems to play a crucial role in the proofreading step occurring at the peptidyl transferase center and thus would serve to optimize ribosomal fidelity. The sequence is that of Dual-specificity RNA methyltransferase RlmN from Edwardsiella ictaluri (strain 93-146).